The sequence spans 694 residues: Elongation factor G (694 aa).

Residues 8–287 (EDYRNFGIMA…AVVEFLPAPT (280 aa)) enclose the tr-type G domain. Residues 17–24 (AHIDAGKT), 86–90 (DTPGH), and 140–143 (NKMD) each bind GTP.

The protein belongs to the TRAFAC class translation factor GTPase superfamily. Classic translation factor GTPase family. EF-G/EF-2 subfamily.

The protein resides in the cytoplasm. Its function is as follows. Catalyzes the GTP-dependent ribosomal translocation step during translation elongation. During this step, the ribosome changes from the pre-translocational (PRE) to the post-translocational (POST) state as the newly formed A-site-bound peptidyl-tRNA and P-site-bound deacylated tRNA move to the P and E sites, respectively. Catalyzes the coordinated movement of the two tRNA molecules, the mRNA and conformational changes in the ribosome. This is Elongation factor G from Brucella anthropi (strain ATCC 49188 / DSM 6882 / CCUG 24695 / JCM 21032 / LMG 3331 / NBRC 15819 / NCTC 12168 / Alc 37) (Ochrobactrum anthropi).